The following is a 126-amino-acid chain: Small ribosomal subunit protein uS12 (126 aa).

Position 89 is a 3-methylthioaspartic acid (Asp89).

It belongs to the universal ribosomal protein uS12 family. Part of the 30S ribosomal subunit. Contacts proteins S8 and S17. May interact with IF1 in the 30S initiation complex.

Its function is as follows. With S4 and S5 plays an important role in translational accuracy. In terms of biological role, interacts with and stabilizes bases of the 16S rRNA that are involved in tRNA selection in the A site and with the mRNA backbone. Located at the interface of the 30S and 50S subunits, it traverses the body of the 30S subunit contacting proteins on the other side and probably holding the rRNA structure together. The combined cluster of proteins S8, S12 and S17 appears to hold together the shoulder and platform of the 30S subunit. This chain is Small ribosomal subunit protein uS12, found in Polynucleobacter necessarius subsp. necessarius (strain STIR1).